The following is a 455-amino-acid chain: Argininosuccinate lyase (455 aa).

It belongs to the lyase 1 family. Argininosuccinate lyase subfamily.

Its subcellular location is the cytoplasm. The enzyme catalyses 2-(N(omega)-L-arginino)succinate = fumarate + L-arginine. It participates in amino-acid biosynthesis; L-arginine biosynthesis; L-arginine from L-ornithine and carbamoyl phosphate: step 3/3. The sequence is that of Argininosuccinate lyase from Shewanella sp. (strain MR-4).